The sequence spans 139 residues: MMNINEIKEILPHRYPFLLVDKVEEITESKVVAYKNVTINEPFFQGHFPDYPVMPGVLIVEALAQAGAIALLNKEEFKGKTPFFAGIDKVRFKKQVLPGDTLRLEVEIIKLRGSIGFGKATATVDGKIACSGEIMFAIG.

The active site involves His47.

This sequence belongs to the thioester dehydratase family. FabZ subfamily.

Its subcellular location is the cytoplasm. It catalyses the reaction a (3R)-hydroxyacyl-[ACP] = a (2E)-enoyl-[ACP] + H2O. Involved in unsaturated fatty acids biosynthesis. Catalyzes the dehydration of short chain beta-hydroxyacyl-ACPs and long chain saturated and unsaturated beta-hydroxyacyl-ACPs. The polypeptide is 3-hydroxyacyl-[acyl-carrier-protein] dehydratase FabZ (Clostridium perfringens (strain ATCC 13124 / DSM 756 / JCM 1290 / NCIMB 6125 / NCTC 8237 / Type A)).